The sequence spans 501 residues: Beta-secretase 1 (501 aa).

The signal sequence occupies residues 1–21 (MAQALPWLLLWMGAGVLPAHG). The propeptide occupies 22-45 (TQHGIRLPLRSGLGGAPLGLRLPR). The Extracellular portion of the chain corresponds to 22 to 457 (TQHGIRLPLR…PQTDESTLMT (436 aa)). The interval 39–58 (LGLRLPRETDEEPEEPGRRG) is disordered. Residues 75 to 416 (YYVEMTVGSP…DRARKRIGFA (342 aa)) enclose the Peptidase A1 domain. The active site involves Asp-93. Lys-126 bears the N6-acetyllysine mark. N-linked (GlcNAc...) asparagine glycosylation is found at Asn-153, Asn-172, and Asn-223. Intrachain disulfides connect Cys-216/Cys-420, Cys-278/Cys-443, and Cys-330/Cys-380. 3 positions are modified to N6-acetyllysine: Lys-275, Lys-279, and Lys-285. Asp-289 is an active-site residue. 3 positions are modified to N6-acetyllysine: Lys-299, Lys-300, and Lys-307. N-linked (GlcNAc...) asparagine glycosylation is present at Asn-354. Residues 458 to 478 (IAYVMAAICALFMLPLCLMVC) form a helical membrane-spanning segment. S-palmitoyl cysteine attachment occurs at residues Cys-474, Cys-478, Cys-482, and Cys-485. Residues 479–501 (QWRCLRCLRQQHDDFADDISLLK) are Cytoplasmic-facing. The interval 479 to 501 (QWRCLRCLRQQHDDFADDISLLK) is interaction with RTN3. The DXXLL signature appears at 496 to 500 (DISLL). Position 498 is a phosphoserine (Ser-498). Lys-501 is covalently cross-linked (Glycyl lysine isopeptide (Lys-Gly) (interchain with G-Cter in ubiquitin)).

This sequence belongs to the peptidase A1 family. As to quaternary structure, monomer. Interacts (via DXXLL motif) with GGA1, GGA2 and GGA3 (via their VHS domain); the interaction highly increases when BACE1 is phosphorylated at Ser-498. Interacts with RTN1; RTN2; RTN3 and RTN4; the interaction leads to inhibition of amyloid precursor protein processing. Interacts with SNX6. Interacts with PCSK9. Interacts with NAT8 and NAT8B. Interacts with BIN1. Interacts (via extracellular domain) with ADAM10 (via extracellular domain). Interacts with SORL1; this interaction may affect binding with APP and hence reduce APP cleavage. Interacts with NRDC AND NRG1. N-Glycosylated. Addition of a bisecting N-acetylglucosamine by MGAT3 blocks lysosomal targeting, further degradation and is required for maintaining stability under stress conditions. In terms of processing, acetylated in the endoplasmic reticulum at Lys-126, Lys-275, Lys-279, Lys-285, Lys-299, Lys-300 and Lys-307. Acetylation by NAT8 and NAT8B is transient and deacetylation probably occurs in the Golgi. Acetylation regulates the maturation, the transport to the plasma membrane, the stability and the expression of the protein. Post-translationally, palmitoylation mediates lipid raft localization. Ubiquitinated at Lys-501, ubiquitination leads to lysosomal degradation. Monoubiquitinated and 'Lys-63'-linked polyubitinated. Deubiquitnated by USP8; inhibits lysosomal degradation. In terms of processing, phosphorylation at Ser-498 is required for interaction with GGA1 and retrograded transport from endosomal compartments to the trans-Golgi network. Non-phosphorylated BACE1 enters a direct recycling route to the cell surface. In terms of tissue distribution, expressed at high levels in the brain and pancreas. In the brain, expression is highest in the substantia nigra, locus coruleus and medulla oblongata.

It localises to the cell membrane. It is found in the golgi apparatus. The protein resides in the trans-Golgi network. Its subcellular location is the endoplasmic reticulum. The protein localises to the endosome. It localises to the cell surface. It is found in the cytoplasmic vesicle membrane. The protein resides in the membrane raft. Its subcellular location is the lysosome. The protein localises to the late endosome. It localises to the early endosome. It is found in the recycling endosome. The protein resides in the cell projection. Its subcellular location is the axon. The protein localises to the dendrite. It catalyses the reaction Broad endopeptidase specificity. Cleaves Glu-Val-Asn-Leu-|-Asp-Ala-Glu-Phe in the Swedish variant of Alzheimer's amyloid precursor protein.. With respect to regulation, inhibited by RTN3 and RTN4. In terms of biological role, responsible for the proteolytic processing of the amyloid precursor protein (APP). Cleaves at the N-terminus of the A-beta peptide sequence, between residues 671 and 672 of APP, leads to the generation and extracellular release of beta-cleaved soluble APP, and a corresponding cell-associated C-terminal fragment which is later released by gamma-secretase. Cleaves CHL1. The protein is Beta-secretase 1 of Homo sapiens (Human).